Reading from the N-terminus, the 516-residue chain is Cytochrome P450 6d1 (516 aa).

Residue C461 coordinates heme.

This sequence belongs to the cytochrome P450 family. Heme is required as a cofactor.

It localises to the endoplasmic reticulum membrane. It is found in the microsome membrane. In terms of biological role, metabolizes pyrethroid insecticides and other xenobiotics. This is Cytochrome P450 6d1 (CYP6D1) from Musca domestica (House fly).